Reading from the N-terminus, the 374-residue chain is Protein FAM199X (374 aa).

Residues 238-343 form a disordered region; sequence YIREHSPRQR…QLKEQRQARK (106 aa). Residues 261 to 295 are compositionally biased toward low complexity; it reads SNGSTSGVSAHSSSNASMVSSTSSSTASTGSNSST. Over residues 315–334 the composition is skewed to basic residues; sequence DSKKRSKQRKMQQKALRKRQ. Residues 317 to 346 are a coiled coil; that stretch reads KKRSKQRKMQQKALRKRQLKEQRQARKERL.

This sequence belongs to the FAM199 family.

In Danio rerio (Zebrafish), this protein is Protein FAM199X (fam199x).